A 765-amino-acid polypeptide reads, in one-letter code: 1,4-alpha-glucan branching enzyme GlgB (765 aa).

D431 (nucleophile) is an active-site residue. E484 (proton donor) is an active-site residue.

This sequence belongs to the glycosyl hydrolase 13 family. GlgB subfamily. As to quaternary structure, monomer.

It catalyses the reaction Transfers a segment of a (1-&gt;4)-alpha-D-glucan chain to a primary hydroxy group in a similar glucan chain.. It functions in the pathway glycan biosynthesis; glycogen biosynthesis. In terms of biological role, catalyzes the formation of the alpha-1,6-glucosidic linkages in glycogen by scission of a 1,4-alpha-linked oligosaccharide from growing alpha-1,4-glucan chains and the subsequent attachment of the oligosaccharide to the alpha-1,6 position. The chain is 1,4-alpha-glucan branching enzyme GlgB from Synechococcus sp. (strain CC9605).